The chain runs to 406 residues: L-cysteine:1D-myo-inositol 2-amino-2-deoxy-alpha-D-glucopyranoside ligase (406 aa).

Cys45 provides a ligand contact to Zn(2+). L-cysteinyl-5'-AMP contacts are provided by residues 45–48 (CGIT), Thr60, and 83–85 (NIT). The 'HIGH' region motif lies at 47 to 57 (ITPYDATHMGH). The 'ERGGDP' region signature appears at 185 to 190 (ERGGDP). Position 225 (Trp225) interacts with L-cysteinyl-5'-AMP. A Zn(2+)-binding site is contributed by Cys229. L-cysteinyl-5'-AMP is bound at residue 247–249 (GSD). His254 provides a ligand contact to Zn(2+). Val281 is an L-cysteinyl-5'-AMP binding site. The 'KMSKS' region signature appears at 287–291 (KMSKS).

The protein belongs to the class-I aminoacyl-tRNA synthetase family. MshC subfamily. Monomer. Requires Zn(2+) as cofactor.

It carries out the reaction 1D-myo-inositol 2-amino-2-deoxy-alpha-D-glucopyranoside + L-cysteine + ATP = 1D-myo-inositol 2-(L-cysteinylamino)-2-deoxy-alpha-D-glucopyranoside + AMP + diphosphate + H(+). Its function is as follows. Catalyzes the ATP-dependent condensation of GlcN-Ins and L-cysteine to form L-Cys-GlcN-Ins. The polypeptide is L-cysteine:1D-myo-inositol 2-amino-2-deoxy-alpha-D-glucopyranoside ligase (Kribbella flavida (strain DSM 17836 / JCM 10339 / NBRC 14399)).